The sequence spans 227 residues: PKHD-type hydroxylase Bcep18194_B0892 (227 aa).

Residues 78-178 (KVFPPLFNRY…RVASFFWIQS (101 aa)) enclose the Fe2OG dioxygenase domain. Fe cation is bound by residues His-96, Asp-98, and His-159. Arg-169 serves as a coordination point for 2-oxoglutarate.

Fe(2+) is required as a cofactor. Requires L-ascorbate as cofactor.

This chain is PKHD-type hydroxylase Bcep18194_B0892, found in Burkholderia lata (strain ATCC 17760 / DSM 23089 / LMG 22485 / NCIMB 9086 / R18194 / 383).